Consider the following 401-residue polypeptide: Nodal homolog 3-A (401 aa).

A signal peptide spans 1–18 (MAFLNLFFCLVFISPLMA). A propeptide spanning residues 19–274 (MPPVLQGRKS…KVNGFRRLRR (256 aa)) is cleaved from the precursor. Asn-168, Asn-337, Asn-341, and Asn-344 each carry an N-linked (GlcNAc...) asparagine glycan. 2 disulfide bridges follow: Cys-299/Cys-365 and Cys-328/Cys-396.

It belongs to the TGF-beta family. As to quaternary structure, monomer. The propeptide region interacts with bmp4 in a non-covalent manner. In terms of tissue distribution, expressed in the epithelial layer of the Spemann organizer during gastrulation.

It is found in the secreted. Its function is as follows. Exhibits mesoderm-dorsalizing activity and neural-inducing activity, but lacks mesoderm-inducing activity. Regulates the expression of specific mesodermal and neural genes. Induces convergent extension movements at the embryonic midline by activating the fgf signaling pathway to induce t/bra expression in the organizer region. Acts with wnt11 to induce Spemann organizer cells and induce axis formation. The unprocessed protein antagonizes bmp-signaling. The protein is Nodal homolog 3-A (nodal3-a) of Xenopus laevis (African clawed frog).